Reading from the N-terminus, the 116-residue chain is Large ribosomal subunit protein bL19 (116 aa).

This sequence belongs to the bacterial ribosomal protein bL19 family.

Functionally, this protein is located at the 30S-50S ribosomal subunit interface and may play a role in the structure and function of the aminoacyl-tRNA binding site. The chain is Large ribosomal subunit protein bL19 from Roseiflexus castenholzii (strain DSM 13941 / HLO8).